Here is a 98-residue protein sequence, read N- to C-terminus: NADH-ubiquinone oxidoreductase chain 4L (98 aa).

3 helical membrane passes run 1 to 21, 29 to 49, and 61 to 81; these read MSIT…GMFV, SLLC…IVSL, and VILL…LIMV.

The protein belongs to the complex I subunit 4L family. In terms of assembly, core subunit of respiratory chain NADH dehydrogenase (Complex I) which is composed of 45 different subunits.

Its subcellular location is the mitochondrion inner membrane. The enzyme catalyses a ubiquinone + NADH + 5 H(+)(in) = a ubiquinol + NAD(+) + 4 H(+)(out). Its function is as follows. Core subunit of the mitochondrial membrane respiratory chain NADH dehydrogenase (Complex I) which catalyzes electron transfer from NADH through the respiratory chain, using ubiquinone as an electron acceptor. Part of the enzyme membrane arm which is embedded in the lipid bilayer and involved in proton translocation. The protein is NADH-ubiquinone oxidoreductase chain 4L (MT-ND4L) of Ochotona princeps (Southern American pika).